The sequence spans 316 residues: L-lactate dehydrogenase (316 aa).

NAD(+) contacts are provided by residues Met-14, 14–150 (MIGG…IIGL), Ile-15, Asp-35, Tyr-67, Gly-81, Phe-82, Val-125, Asn-127, and Leu-150. Arg-95 lines the substrate pocket. Substrate is bound by residues Arg-158 and His-182. Catalysis depends on His-182, which acts as the Proton acceptor.

The protein belongs to the LDH/MDH superfamily. LDH family. Homotetramer.

It catalyses the reaction (S)-lactate + NAD(+) = pyruvate + NADH + H(+). Its pathway is fermentation; pyruvate fermentation to lactate; (S)-lactate from pyruvate: step 1/1. The chain is L-lactate dehydrogenase from Plasmodium falciparum (isolate CDC / Honduras).